The following is a 690-amino-acid chain: Tripartite terminase subunit 3 (690 aa).

A Walker A motif motif is present at residues 226–233 (IPRRHGKT). The Walker B motif signature appears at 321 to 326 (LLFVDE). Residue Glu326 is the For ATPase activity of the active site. Catalysis depends on for nuclease activity residues Asp481, Glu555, and Asp667.

This sequence belongs to the herpesviridae TRM3 protein family. As to quaternary structure, interacts with the terminase subunits TRM1 and TRM2. Interacts with portal protein.

It is found in the host nucleus. In terms of biological role, component of the molecular motor that translocates viral genomic DNA in empty capsid during DNA packaging. Forms a tripartite terminase complex together with TRM1 and TRM2 in the host cytoplasm. Once the complex reaches the host nucleus, it interacts with the capsid portal vertex. This portal forms a ring in which genomic DNA is translocated into the capsid. TRM3 carries an RNase H-like nuclease activity that plays an important role for the cleavage of concatemeric viral DNA into unit length genomes. This is Tripartite terminase subunit 3 from Homo sapiens (Human).